We begin with the raw amino-acid sequence, 368 residues long: Leu/Ile/Val-binding protein homolog 3 (368 aa).

An N-terminal signal peptide occupies residues 1-23 (MNLKLLSSVAFAATIGFASAAYA).

The protein belongs to the leucine-binding protein family.

Its function is as follows. Component of an amino-acid transport system. This is Leu/Ile/Val-binding protein homolog 3 from Brucella melitensis biotype 1 (strain ATCC 23456 / CCUG 17765 / NCTC 10094 / 16M).